The following is a 167-amino-acid chain: NAD(P)H-quinone oxidoreductase subunit I, chloroplastic (167 aa).

2 4Fe-4S ferredoxin-type domains span residues 55–84 (GRIH…VDWK) and 95–124 (LNYS…MTEE). Residues Cys-64, Cys-67, Cys-70, Cys-74, Cys-104, Cys-107, Cys-110, and Cys-114 each coordinate [4Fe-4S] cluster.

The protein belongs to the complex I 23 kDa subunit family. As to quaternary structure, NDH is composed of at least 16 different subunits, 5 of which are encoded in the nucleus. [4Fe-4S] cluster is required as a cofactor.

The protein resides in the plastid. The protein localises to the chloroplast thylakoid membrane. It catalyses the reaction a plastoquinone + NADH + (n+1) H(+)(in) = a plastoquinol + NAD(+) + n H(+)(out). The enzyme catalyses a plastoquinone + NADPH + (n+1) H(+)(in) = a plastoquinol + NADP(+) + n H(+)(out). Its function is as follows. NDH shuttles electrons from NAD(P)H:plastoquinone, via FMN and iron-sulfur (Fe-S) centers, to quinones in the photosynthetic chain and possibly in a chloroplast respiratory chain. The immediate electron acceptor for the enzyme in this species is believed to be plastoquinone. Couples the redox reaction to proton translocation, and thus conserves the redox energy in a proton gradient. The polypeptide is NAD(P)H-quinone oxidoreductase subunit I, chloroplastic (Lepidium virginicum (Virginia pepperweed)).